Here is a 310-residue protein sequence, read N- to C-terminus: NADH-cytochrome b5 reductase 1 (310 aa).

Residues 30 to 50 (WVPFAVALAAGFVAWKLSVGG) form a helical membrane-spanning segment. The FAD-binding FR-type domain occupies 61–166 (NEFQNFVLKE…RGPKGAMVYT (106 aa)). FAD-binding positions include 146-160 (TTLK…RGPK) and 172-209 (HIGM…QVDL).

It belongs to the flavoprotein pyridine nucleotide cytochrome reductase family. As to quaternary structure, monomer. Component of the 2-(3-amino-3-carboxypropyl)histidine synthase complex composed of dph1, dph2, dph3 and a NADH-dependent reductase, predominantly cbr1. FAD serves as cofactor.

Its subcellular location is the mitochondrion outer membrane. The enzyme catalyses 2 Fe(III)-[cytochrome b5] + NADH = 2 Fe(II)-[cytochrome b5] + NAD(+) + H(+). It carries out the reaction 2 Fe(3+)-[Dph3] + NADH = 2 Fe(2+)-[Dph3] + NAD(+) + H(+). It functions in the pathway protein modification; peptidyl-diphthamide biosynthesis. Functionally, NADH-dependent reductase for dph3 and cytochrome b5. Required for the first step of diphthamide biosynthesis, a post-translational modification of histidine which occurs in elongation factor 2. Dph1 and dph2 transfer a 3-amino-3-carboxypropyl (ACP) group from S-adenosyl-L-methionine (SAM) to a histidine residue, the reaction is assisted by a reduction system comprising dph3 and a NADH-dependent reductase, predominantly cbr1. By reducing dph3, also involved in the formation of the tRNA wobble base modification mcm5s 2U (5-methoxycarbonylmethyl-2-thiouridine), mediated by the elongator complex. The cytochrome b5/NADH cytochrome b5 reductase electron transfer system supports the catalytic activity of several sterol biosynthetic enzymes. This Emericella nidulans (strain FGSC A4 / ATCC 38163 / CBS 112.46 / NRRL 194 / M139) (Aspergillus nidulans) protein is NADH-cytochrome b5 reductase 1 (cbr1).